The chain runs to 535 residues: MAAAVAAAAAMRSRILQVSSKVNATWYPASSFSSSSVPTVKLFIDGKFVESKSDKWIDIHNPATNEVVGRVPQSTKAEMDAAVESCKRAFPAWADTSILSRQQVLLRYQQLIKENLKEIARLITLEQGKTLADAEGDVFRGLQVVEHACSVTSLMLGETMPSITKDMDLYSYRLPLGVCAGIAPFNFPAMIPLWMFPMAMVCGNTFLMKPSERVPGATMLLAKLLQDSGAPDGTLNIIHGQHDAVNFICDHPDIKAISFVGSNQAGEYIFERGSRNGKRVQANMGAKNHGVVMPDANKENTLNQLVGAAFGAAGQRCMALSTAILVGEAKKWLPELVDRAKNLRVNAGDQPGADLGPLITPQAKERVCNLIDSGTKEGASILLDGRRIKVKGYENGNFVGPTIISNVKPSMTCYKEEIFGPVLVVLETETLDEAIKIVNDNPYGNGTAIFTTNGATARKYAHMVDVGQVGVNVPIPVPLPMFSFTGSRSSFRGDTNFYGKQGIQFYTQLKTITSQWKEEDATLSSPAVVMPTMGR.

The N-terminal 32 residues, 1–32, are a transit peptide targeting the mitochondrion; that stretch reads MAAAVAAAAAMRSRILQVSSKVNATWYPASSF. 4 positions are modified to N6-acetyllysine; alternate: Lys47, Lys52, Lys55, and Lys76. Residues Lys47, Lys52, Lys55, and Lys76 each carry the N6-succinyllysine; alternate modification. N6-acetyllysine is present on Lys87. N6-acetyllysine; alternate occurs at positions 117 and 129. N6-succinyllysine; alternate occurs at positions 117 and 129. Residues Ala183, Phe185, Lys209, Glu212, Arg213, and Ser262 each coordinate NAD(+). Ser262 carries the post-translational modification Phosphoserine. An N6-acetyllysine modification is found at Lys298. Cys317 acts as the Nucleophile in catalysis. Lys330 and Lys331 each carry N6-acetyllysine. N6-acetyllysine; alternate is present on residues Lys364 and Lys376. Lys364 and Lys376 each carry N6-succinyllysine; alternate. Ser380 is modified (phosphoserine). Position 391 is an N6-succinyllysine (Lys391). Residue Glu417 coordinates NAD(+). Lys500 bears the N6-acetyllysine mark. Position 517 is an N6-succinyllysine (Lys517).

The protein belongs to the aldehyde dehydrogenase family. Homotetramer. Acetylation of Lys-55; Lys-117 and Lys-331 is observed in liver mitochondria from fasted mice but not from fed mice.

It localises to the mitochondrion. It catalyses the reaction 3-oxopropanoate + NAD(+) + CoA + H2O = hydrogencarbonate + acetyl-CoA + NADH + H(+). The catalysed reaction is 2-methyl-3-oxopropanoate + NAD(+) + CoA + H2O = propanoyl-CoA + hydrogencarbonate + NADH + H(+). It carries out the reaction (R)-2-methyl-3-oxopropanoate + NAD(+) + CoA + H2O = propanoyl-CoA + hydrogencarbonate + NADH + H(+). The enzyme catalyses (S)-2-methyl-3-oxopropanoate + NAD(+) + CoA + H2O = propanoyl-CoA + hydrogencarbonate + NADH + H(+). Malonate and methylmalonate semialdehyde dehydrogenase involved in the catabolism of valine, thymine, and compounds catabolized by way of beta-alanine, including uracil and cytidine. The sequence is that of Methylmalonate-semialdehyde/malonate-semialdehyde dehydrogenase [acylating], mitochondrial from Mus musculus (Mouse).